The chain runs to 288 residues: 2-hydroxy-6-oxononadienedioate/2-hydroxy-6-oxononatrienedioate hydrolase (288 aa).

His-267 acts as the Proton acceptor in catalysis.

The protein belongs to the AB hydrolase superfamily. MhpC family. Homodimer.

It catalyses the reaction (2Z,4E)-2-hydroxy-6-oxonona-2,4-dienedioate + H2O = (2Z)-2-hydroxypenta-2,4-dienoate + succinate + H(+). The catalysed reaction is (2Z,4E,7E)-2-hydroxy-6-oxonona-2,4,7-trienedioate + H2O = (2Z)-2-hydroxypenta-2,4-dienoate + fumarate + H(+). It participates in aromatic compound metabolism; 3-phenylpropanoate degradation. In terms of biological role, catalyzes the cleavage of the C5-C6 bond of 2-hydroxy-6-oxononadienedioate and 2-hydroxy-6-oxononatrienedioate, a dienol ring fission product of the bacterial meta-cleavage pathway for degradation of phenylpropionic acid. The sequence is that of 2-hydroxy-6-oxononadienedioate/2-hydroxy-6-oxononatrienedioate hydrolase from Escherichia coli (strain K12 / DH10B).